Here is a 628-residue protein sequence, read N- to C-terminus: F-box only protein 21 (628 aa).

Residues 28-84 (SCLVNLPGEVLEYILCCGSLTAADIGRVSSTCRRLRELCQSSGKVWKEQFRVRWPSL) form the F-box domain.

Directly interacts with SKP1 and CUL1.

Its function is as follows. Substrate-recognition component of the SCF (SKP1-CUL1-F-box protein)-type E3 ubiquitin ligase complex. This chain is F-box only protein 21 (FBXO21), found in Homo sapiens (Human).